A 76-amino-acid polypeptide reads, in one-letter code: Small ribosomal subunit protein bS18 (76 aa).

It belongs to the bacterial ribosomal protein bS18 family. Part of the 30S ribosomal subunit. Forms a tight heterodimer with protein bS6.

Functionally, binds as a heterodimer with protein bS6 to the central domain of the 16S rRNA, where it helps stabilize the platform of the 30S subunit. This chain is Small ribosomal subunit protein bS18, found in Xylella fastidiosa (strain 9a5c).